Here is a 127-residue protein sequence, read N- to C-terminus: Small ribosomal subunit protein uS11 (127 aa).

Belongs to the universal ribosomal protein uS11 family. As to quaternary structure, part of the 30S ribosomal subunit. Interacts with proteins S7 and S18. Binds to IF-3.

In terms of biological role, located on the platform of the 30S subunit, it bridges several disparate RNA helices of the 16S rRNA. Forms part of the Shine-Dalgarno cleft in the 70S ribosome. The protein is Small ribosomal subunit protein uS11 of Ehrlichia ruminantium (strain Gardel).